Consider the following 100-residue polypeptide: Small ribosomal subunit protein uS14 (100 aa).

This sequence belongs to the universal ribosomal protein uS14 family. In terms of assembly, part of the 30S ribosomal subunit. Contacts proteins S3 and S10.

In terms of biological role, binds 16S rRNA, required for the assembly of 30S particles and may also be responsible for determining the conformation of the 16S rRNA at the A site. The chain is Small ribosomal subunit protein uS14 from Prochlorococcus marinus (strain NATL2A).